The chain runs to 496 residues: UDP-N-acetylmuramoyl-L-alanyl-D-glutamate--2,6-diaminopimelate ligase (496 aa).

Residue Ser32 coordinates UDP-N-acetyl-alpha-D-muramoyl-L-alanyl-D-glutamate. 116–122 (GTNGKTT) provides a ligand contact to ATP. UDP-N-acetyl-alpha-D-muramoyl-L-alanyl-D-glutamate contacts are provided by residues 158–159 (TT), Ser185, Gln191, and Arg193. Lys225 bears the N6-carboxylysine mark. Meso-2,6-diaminopimelate-binding positions include Arg389, 413–416 (DNPR), Gly464, and Glu468. Positions 413–416 (DNPR) match the Meso-diaminopimelate recognition motif motif.

It belongs to the MurCDEF family. MurE subfamily. Mg(2+) serves as cofactor. Post-translationally, carboxylation is probably crucial for Mg(2+) binding and, consequently, for the gamma-phosphate positioning of ATP.

The protein localises to the cytoplasm. The enzyme catalyses UDP-N-acetyl-alpha-D-muramoyl-L-alanyl-D-glutamate + meso-2,6-diaminopimelate + ATP = UDP-N-acetyl-alpha-D-muramoyl-L-alanyl-gamma-D-glutamyl-meso-2,6-diaminopimelate + ADP + phosphate + H(+). Its pathway is cell wall biogenesis; peptidoglycan biosynthesis. Functionally, catalyzes the addition of meso-diaminopimelic acid to the nucleotide precursor UDP-N-acetylmuramoyl-L-alanyl-D-glutamate (UMAG) in the biosynthesis of bacterial cell-wall peptidoglycan. The polypeptide is UDP-N-acetylmuramoyl-L-alanyl-D-glutamate--2,6-diaminopimelate ligase (Trichormus variabilis (strain ATCC 29413 / PCC 7937) (Anabaena variabilis)).